A 415-amino-acid polypeptide reads, in one-letter code: Multifunctional CCA protein (415 aa).

ATP is bound by residues Gly8 and Arg11. The CTP site is built by Gly8 and Arg11. Mg(2+) is bound by residues Asp21 and Asp23. ATP is bound by residues Arg91, Arg137, and Arg140. CTP is bound by residues Arg91, Arg137, and Arg140. One can recognise an HD domain in the interval Thr228–Trp329.

Belongs to the tRNA nucleotidyltransferase/poly(A) polymerase family. Bacterial CCA-adding enzyme type 1 subfamily. Monomer. Can also form homodimers and oligomers. The cofactor is Mg(2+). It depends on Ni(2+) as a cofactor.

It catalyses the reaction a tRNA precursor + 2 CTP + ATP = a tRNA with a 3' CCA end + 3 diphosphate. The catalysed reaction is a tRNA with a 3' CCA end + 2 CTP + ATP = a tRNA with a 3' CCACCA end + 3 diphosphate. Catalyzes the addition and repair of the essential 3'-terminal CCA sequence in tRNAs without using a nucleic acid template. Adds these three nucleotides in the order of C, C, and A to the tRNA nucleotide-73, using CTP and ATP as substrates and producing inorganic pyrophosphate. tRNA 3'-terminal CCA addition is required both for tRNA processing and repair. Also involved in tRNA surveillance by mediating tandem CCA addition to generate a CCACCA at the 3' terminus of unstable tRNAs. While stable tRNAs receive only 3'-terminal CCA, unstable tRNAs are marked with CCACCA and rapidly degraded. The protein is Multifunctional CCA protein of Cronobacter sakazakii (strain ATCC BAA-894) (Enterobacter sakazakii).